The following is a 429-amino-acid chain: MRAELNQGLIDFLKASPTPFHATASLARRLEAAGYRRLDERDAWHTEAGGRYYVTRNDSSLIAIRLGRRSPLESGFRLVGAHTDSPCLRVKPNPEIARNGFLQLGVEVYGGALFAPWFDRDLSLAGRVTFRANGKLESRLVDFRKAIAVIPNLAIHLNRAANEGWPINAQNELPPIIAQLAPGEAADFRLLLDEQLLREHGITADVVLDYELSFYDTQSAAVIGLNDEFIAGARLDNLLSCHAGLEALLNAEGDENCILVCTDHEEVGSCSHCGADGPFLEQVLRRLLPEGDAFSRAIQRSLLVSADNAHGVHPNYADRHDANHGPALNGGPVIKINSNQRYATNSETAGFFRHLCQDSEVPVQSFVTRSDMGCGSTIGPITASQVGVRTVDIGLPTFAMHSIRELAGSHDLAHLVKVLGAFYASSELP.

Residues His82, His156, and His401 each coordinate Zn(2+).

This sequence belongs to the peptidase M18 family. Zn(2+) serves as cofactor.

This Pseudomonas paraeruginosa (strain DSM 24068 / PA7) (Pseudomonas aeruginosa (strain PA7)) protein is Probable M18 family aminopeptidase 2.